We begin with the raw amino-acid sequence, 153 residues long: 3-hydroxyacyl-[acyl-carrier-protein] dehydratase FabZ (153 aa).

Residue H52 is part of the active site.

Belongs to the thioester dehydratase family. FabZ subfamily.

The protein localises to the cytoplasm. The catalysed reaction is a (3R)-hydroxyacyl-[ACP] = a (2E)-enoyl-[ACP] + H2O. In terms of biological role, involved in unsaturated fatty acids biosynthesis. Catalyzes the dehydration of short chain beta-hydroxyacyl-ACPs and long chain saturated and unsaturated beta-hydroxyacyl-ACPs. The sequence is that of 3-hydroxyacyl-[acyl-carrier-protein] dehydratase FabZ from Magnetococcus marinus (strain ATCC BAA-1437 / JCM 17883 / MC-1).